A 411-amino-acid polypeptide reads, in one-letter code: ATP-dependent RNA helicase eIF4A (411 aa).

Residues 1–23 (MSKPEDTSAAAAAPAGEAGNNLN) are disordered. Positions 9–19 (AAAAAPAGEAG) are enriched in low complexity. The short motif at 38-66 (DNFDNMELKEELLRGVYAYGFERPSAIQA) is the Q motif element. A Helicase ATP-binding domain is found at 69 to 239 (IVPVIKGHDV…KKFMRDPIRI (171 aa)). 82–89 (AQSGTGKT) contributes to the ATP binding site. The DEAD box signature appears at 187-190 (DEAD). Residues 250–411 (GIKQFYVAVE…EMPLNVADLI (162 aa)) enclose the Helicase C-terminal domain.

It belongs to the DEAD box helicase family. eIF4A subfamily. Component of the eIF4F complex, which composition varies with external and internal environmental conditions. It is composed of at least eIF4A, eIF4E and eIF4G.

The protein localises to the cytoplasm. The catalysed reaction is ATP + H2O = ADP + phosphate + H(+). Functionally, ATP-dependent RNA helicase which is a subunit of the eIF4F complex involved in cap recognition and is required for mRNA binding to ribosome. In the current model of translation initiation, eIF4A unwinds RNA secondary structures in the 5'-UTR of mRNAs which is necessary to allow efficient binding of the small ribosomal subunit, and subsequent scanning for the initiator codon. The polypeptide is ATP-dependent RNA helicase eIF4A (TIF1) (Mycosarcoma maydis (Corn smut fungus)).